A 43-amino-acid polypeptide reads, in one-letter code: Protein PsbN (43 aa).

The chain crosses the membrane as a helical span at residues threonine 5–phenylalanine 27.

Belongs to the PsbN family.

The protein resides in the plastid. The protein localises to the chloroplast thylakoid membrane. May play a role in photosystem I and II biogenesis. The protein is Protein PsbN of Eucalyptus globulus subsp. globulus (Tasmanian blue gum).